We begin with the raw amino-acid sequence, 223 residues long: Probable 3-beta-hydroxysteroid-Delta(8),Delta(7)-isomerase (223 aa).

Transmembrane regions (helical) follow at residues 28–48 (IVSI…LLFG), 58–78 (LMCW…YFVF), 115–135 (VEGI…YAIA), and 175–195 (FYYY…PSLI). The 143-residue stretch at 54 to 196 (LDKLLMCWWT…WWVLIPSLIS (143 aa)) folds into the EXPERA domain.

It belongs to the EBP family.

It is found in the endoplasmic reticulum membrane. The enzyme catalyses lathosterol = 5alpha-cholest-8-en-3beta-ol. Its pathway is steroid biosynthesis; sterol biosynthesis. In terms of biological role, catalyzes the conversion of Delta(8)-sterols to their corresponding Delta(7)-isomers. This Arabidopsis thaliana (Mouse-ear cress) protein is Probable 3-beta-hydroxysteroid-Delta(8),Delta(7)-isomerase.